We begin with the raw amino-acid sequence, 452 residues long: Phosphoglucosamine mutase (452 aa).

Ser98 serves as the catalytic Phosphoserine intermediate. Mg(2+) is bound by residues Ser98, Asp239, Asp241, and Asp243. Position 98 is a phosphoserine (Ser98).

It belongs to the phosphohexose mutase family. Mg(2+) is required as a cofactor. Post-translationally, activated by phosphorylation.

It catalyses the reaction alpha-D-glucosamine 1-phosphate = D-glucosamine 6-phosphate. Functionally, catalyzes the conversion of glucosamine-6-phosphate to glucosamine-1-phosphate. The protein is Phosphoglucosamine mutase of Anaplasma marginale (strain St. Maries).